The chain runs to 386 residues: Methylthioribose-1-phosphate isomerase (386 aa).

Asp-255 (proton donor) is an active-site residue.

It belongs to the eIF-2B alpha/beta/delta subunits family. MtnA subfamily.

Its subcellular location is the cytoplasm. The protein localises to the nucleus. The enzyme catalyses 5-(methylsulfanyl)-alpha-D-ribose 1-phosphate = 5-(methylsulfanyl)-D-ribulose 1-phosphate. Its pathway is amino-acid biosynthesis; L-methionine biosynthesis via salvage pathway; L-methionine from S-methyl-5-thio-alpha-D-ribose 1-phosphate: step 1/6. In terms of biological role, catalyzes the interconversion of methylthioribose-1-phosphate (MTR-1-P) into methylthioribulose-1-phosphate (MTRu-1-P). The sequence is that of Methylthioribose-1-phosphate isomerase from Trypanosoma brucei brucei (strain 927/4 GUTat10.1).